Here is a 623-residue protein sequence, read N- to C-terminus: Pyranose 2-oxidase (623 aa).

Residues 1–28 form the signal peptide; the sequence is MSTSSSDPFFNFAKSSFRSAAAQKASAS. Residues 29–38 constitute a propeptide that is removed on maturation; the sequence is SLPPLPGPDK. At H167 the chain carries Tele-8alpha-FAD histidine. Substrate is bound by residues Q448 and H450. H548 acts as the Proton acceptor in catalysis. The active site involves N593.

The protein belongs to the GMC oxidoreductase family. Homotetramer. FAD is required as a cofactor.

The protein resides in the periplasm. It catalyses the reaction D-glucose + O2 = 2-dehydro-D-glucose + H2O2. Catalyzes the oxidation of various aldopyranoses and disaccharides on carbon-2 to the corresponding 2-keto sugars concomitant with the reduction of O(2) to H(2)O(2). Plays an important role in lignin degradation of wood rot fungi by supplying the essential cosubstrate H(2)O(2) for the ligninolytic peroxidases, lignin peroxidase and manganese-dependent peroxidase. The sequence is that of Pyranose 2-oxidase (p2ox) from Peniophora sp. (strain SG) (White-rot fungus).